Reading from the N-terminus, the 520-residue chain is Glycosyl hydrolase family 109 protein 5 (520 aa).

A signal peptide spans 1-27 (MRTFKSLMISLCMGTTLCMCLPQTTTA). NAD(+)-binding positions include 77–78 (MR), Asp-99, 147–150 (WLHH), 167–168 (EV), and Asn-196. Substrate is bound by residues Tyr-225, Arg-248, 260-263 (YATH), and Tyr-338. Tyr-260 lines the NAD(+) pocket.

This sequence belongs to the Gfo/Idh/MocA family. Glycosyl hydrolase 109 subfamily. Requires NAD(+) as cofactor.

Its function is as follows. Glycosidase. This is Glycosyl hydrolase family 109 protein 5 from Phocaeicola vulgatus (strain ATCC 8482 / DSM 1447 / JCM 5826 / CCUG 4940 / NBRC 14291 / NCTC 11154) (Bacteroides vulgatus).